Here is a 114-residue protein sequence, read N- to C-terminus: MLWVLGGKKIAKCLKETVNPKEIEDKELIKFLINFCDMCNDFVIDDEKIGIKIDKCKYCPKQIGEAEIPGSACPIPSILASCMRELTKKDYKINLWDGNKVIIKENGYCWFRIK.

This is an uncharacterized protein from Methanocaldococcus jannaschii (strain ATCC 43067 / DSM 2661 / JAL-1 / JCM 10045 / NBRC 100440) (Methanococcus jannaschii).